Reading from the N-terminus, the 900-residue chain is Probable dipeptidyl-aminopeptidase B (900 aa).

Residues 1-83 are disordered; it reads MARTDQGLGA…DILSHPRDKS (83 aa). Topologically, residues 1–90 are cytoplasmic; the sequence is MARTDQGLGA…DKSKRSRGSR (90 aa). Positions 24 to 39 are enriched in low complexity; that stretch reads NSFSSTDSLSTDGSLF. Polar residues predominate over residues 44-55; the sequence is NATQFQKSTQLP. The chain crosses the membrane as a helical; Signal-anchor for type II membrane protein span at residues 91–111; it reads WIWVIGLLCLGGWILAFILFW. At 112-900 the chain is on the vacuolar side; the sequence is GRRNNNSDIS…HHVGSALAAT (789 aa). N-linked (GlcNAc...) asparagine glycans are attached at residues Asn-150, Asn-195, Asn-348, Asn-410, Asn-514, Asn-639, and Asn-644. Ser-753 functions as the Charge relay system in the catalytic mechanism. Asn-812 is a glycosylation site (N-linked (GlcNAc...) asparagine). Active-site charge relay system residues include Asp-830 and His-863.

The protein belongs to the peptidase S9B family.

The protein localises to the vacuole membrane. The catalysed reaction is Release of an N-terminal dipeptide, Xaa-Yaa-|-Zaa-, from a polypeptide, preferentially when Yaa is Pro, provided Zaa is neither Pro nor hydroxyproline.. In terms of biological role, type IV dipeptidyl-peptidase which removes N-terminal dipeptides sequentially from polypeptides having unsubstituted N-termini provided that the penultimate residue is proline. This Talaromyces stipitatus (strain ATCC 10500 / CBS 375.48 / QM 6759 / NRRL 1006) (Penicillium stipitatum) protein is Probable dipeptidyl-aminopeptidase B (dapB).